We begin with the raw amino-acid sequence, 643 residues long: Capsid scaffolding protein (643 aa).

The span at 1-15 shows a compositional bias: low complexity; it reads MSSPSPSSSSSDHPS. Residues 1 to 31 are disordered; sequence MSSPSPSSSSSDHPSSPAPVPAPPGPVPEAA. The segment covering 16–27 has biased composition (pro residues); it reads SPAPVPAPPGPV. Active-site charge relay system residues include histidine 82, serine 151, and histidine 173. Residues 283–306 are disordered; it reads SARGGEDPPTAAIATTPHPATDAT. The segment covering 290–306 has biased composition (low complexity); sequence PPTAAIATTPHPATDAT. The interaction with pAP stretch occupies residues 324-343; that stretch reads EDLISVPRSTFMTMLQTNLD. Residues 439–445 carry the Nuclear localization signal motif; that stretch reads RPGKRKR. Disordered regions lie at residues 485–519 and 544–625; these read QQFP…QAFY and CAPG…STKP. A compositionally biased stretch (pro residues) spans 489–515; sequence QPLPQPQLQPQAQPQPQPAPQLYPAPP. Residues 607 to 616 show a composition bias toward low complexity; the sequence is PQQQQQPQQQ. The interval 623–643 is interaction with major capsid protein; sequence TKPSQISQLQKIFCEELLNKT.

Belongs to the herpesviridae capsid scaffolding protein family. In terms of assembly, homomultimer. Interacts with major capsid protein. As to quaternary structure, exists in a monomer-dimer equilibrium with the dimer being the active species. In terms of processing, capsid scaffolding protein is cleaved by assemblin after formation of the spherical procapsid. As a result, the capsid obtains its mature, icosahedral shape. Cleavages occur at two or more sites: release (R-site) and maturation (M-site).

The protein resides in the host cytoplasm. It is found in the host nucleus. It carries out the reaction Cleaves -Ala-|-Ser- and -Ala-|-Ala- bonds in the scaffold protein.. In terms of biological role, acts as a scaffold protein by binding major capsid protein in the cytoplasm, inducing the nuclear localization of both proteins. Multimerizes in the nucleus such as major capsid protein forms the icosahedral T=16 capsid. Autocatalytic cleavage releases the assembly protein, and subsequently abolishes interaction with major capsid protein. Cleavages products are evicted from the capsid before or during DNA packaging. Its function is as follows. Protease that plays an essential role in virion assembly within the nucleus. Catalyzes the cleavage of the assembly protein after formation of the spherical procapsid. By that cleavage, the capsid matures and gains its icosahedral shape. The cleavage sites seem to include -Ala-Ser-, -Ala-Ala-, as well as Ala-Thr bonds. Assemblin and cleavages products are evicted from the capsid before or during DNA packaging. Functionally, plays a major role in capsid assembly. Acts as a scaffold protein by binding major capsid protein. Multimerizes in the nucleus such as major capsid protein forms the icosahedral T=16 capsid. Cleaved by assemblin after capsid completion. The cleavages products are evicted from the capsid before or during DNA packaging. This Equine herpesvirus 2 (strain 86/87) (EHV-2) protein is Capsid scaffolding protein.